Reading from the N-terminus, the 567-residue chain is Fanconi anemia group C protein homolog (567 aa).

Belongs to the multisubunit FA complex composed of FANCA, FANCB, FANCC, FANCE, FANCF, FANCG, FANCL/PHF9 and FANCM. This complex may also include HSP70. Interacts with ZBTB32. Upon IFNG induction, interacts with STAT1. Interacts with CDK1. Interacts with EIF2AK2.

Its subcellular location is the nucleus. It is found in the cytoplasm. Functionally, DNA repair protein that may operate in a postreplication repair or a cell cycle checkpoint function. May be implicated in interstrand DNA cross-link repair and in the maintenance of normal chromosome stability. Upon IFNG induction, may facilitate STAT1 activation by recruiting STAT1 to IFNGR1. The sequence is that of Fanconi anemia group C protein homolog (FANCC) from Bos taurus (Bovine).